The sequence spans 117 residues: Large ribosomal subunit protein uL23 (117 aa).

The protein belongs to the universal ribosomal protein uL23 family. As to quaternary structure, part of the 50S ribosomal subunit. Contacts protein L29, and trigger factor when it is bound to the ribosome.

Functionally, one of the early assembly proteins it binds 23S rRNA. One of the proteins that surrounds the polypeptide exit tunnel on the outside of the ribosome. Forms the main docking site for trigger factor binding to the ribosome. This is Large ribosomal subunit protein uL23 from Ruminiclostridium cellulolyticum (strain ATCC 35319 / DSM 5812 / JCM 6584 / H10) (Clostridium cellulolyticum).